A 126-amino-acid chain; its full sequence is Probable 4-amino-4-deoxy-L-arabinose-phosphoundecaprenol flippase subunit ArnF (126 aa).

Residues 1 to 21 (MGFLWALFSVGLVSAAQLLLR) form a helical membrane-spanning segment. Residues 22-47 (SAMVALPPLTDIVAFLQHLLHFQPGT) are Periplasmic-facing. The chain crosses the membrane as a helical span at residues 48–68 (VGLFFGLLGYLLSMVCWYFAL). The Cytoplasmic segment spans residues 69 to 76 (HRLPLSKA). A helical membrane pass occupies residues 77–97 (YALLSLSYILVWAAAIWLPGW). Over 98 to 100 (HEP) the chain is Periplasmic. A helical membrane pass occupies residues 101 to 121 (FYWQSLLGVTIIVAGVLTIFW). The Cytoplasmic portion of the chain corresponds to 122 to 126 (PVKRR).

This sequence belongs to the ArnF family. In terms of assembly, heterodimer of ArnE and ArnF.

It is found in the cell inner membrane. The protein operates within bacterial outer membrane biogenesis; lipopolysaccharide biosynthesis. Translocates 4-amino-4-deoxy-L-arabinose-phosphoundecaprenol (alpha-L-Ara4N-phosphoundecaprenol) from the cytoplasmic to the periplasmic side of the inner membrane. This chain is Probable 4-amino-4-deoxy-L-arabinose-phosphoundecaprenol flippase subunit ArnF, found in Klebsiella pneumoniae (strain 342).